A 496-amino-acid polypeptide reads, in one-letter code: Glycerol kinase (496 aa).

Thr-12 provides a ligand contact to ADP. ATP is bound by residues Thr-12, Thr-13, and Ser-14. A sn-glycerol 3-phosphate-binding site is contributed by Thr-12. Residue Arg-16 coordinates ADP. Residues Arg-82, Glu-83, and Tyr-134 each contribute to the sn-glycerol 3-phosphate site. Residues Arg-82, Glu-83, and Tyr-134 each coordinate glycerol. Residue His-230 is modified to Phosphohistidine; by HPr. Asp-244 is a binding site for sn-glycerol 3-phosphate. Asp-244 and Gln-245 together coordinate glycerol. Thr-266 and Gly-309 together coordinate ADP. The ATP site is built by Thr-266, Gly-309, Gln-313, and Gly-410. ADP is bound by residues Gly-410 and Asn-414.

The protein belongs to the FGGY kinase family. Homotetramer and homodimer (in equilibrium). In terms of processing, the phosphoenolpyruvate-dependent sugar phosphotransferase system (PTS), including enzyme I, and histidine-containing protein (HPr) are required for the phosphorylation, which leads to the activation of the enzyme.

The enzyme catalyses glycerol + ATP = sn-glycerol 3-phosphate + ADP + H(+). It functions in the pathway polyol metabolism; glycerol degradation via glycerol kinase pathway; sn-glycerol 3-phosphate from glycerol: step 1/1. With respect to regulation, activated by phosphorylation and inhibited by fructose 1,6-bisphosphate (FBP). In terms of biological role, key enzyme in the regulation of glycerol uptake and metabolism. Catalyzes the phosphorylation of glycerol to yield sn-glycerol 3-phosphate. This is Glycerol kinase from Bacillus cereus (strain ATCC 14579 / DSM 31 / CCUG 7414 / JCM 2152 / NBRC 15305 / NCIMB 9373 / NCTC 2599 / NRRL B-3711).